The chain runs to 253 residues: Imidazole glycerol phosphate synthase subunit HisF (253 aa).

Catalysis depends on residues aspartate 11 and aspartate 130.

It belongs to the HisA/HisF family. As to quaternary structure, heterodimer of HisH and HisF.

Its subcellular location is the cytoplasm. The catalysed reaction is 5-[(5-phospho-1-deoxy-D-ribulos-1-ylimino)methylamino]-1-(5-phospho-beta-D-ribosyl)imidazole-4-carboxamide + L-glutamine = D-erythro-1-(imidazol-4-yl)glycerol 3-phosphate + 5-amino-1-(5-phospho-beta-D-ribosyl)imidazole-4-carboxamide + L-glutamate + H(+). Its pathway is amino-acid biosynthesis; L-histidine biosynthesis; L-histidine from 5-phospho-alpha-D-ribose 1-diphosphate: step 5/9. Its function is as follows. IGPS catalyzes the conversion of PRFAR and glutamine to IGP, AICAR and glutamate. The HisF subunit catalyzes the cyclization activity that produces IGP and AICAR from PRFAR using the ammonia provided by the HisH subunit. This Acetivibrio thermocellus (strain ATCC 27405 / DSM 1237 / JCM 9322 / NBRC 103400 / NCIMB 10682 / NRRL B-4536 / VPI 7372) (Clostridium thermocellum) protein is Imidazole glycerol phosphate synthase subunit HisF.